A 156-amino-acid polypeptide reads, in one-letter code: Transcription antitermination protein NusB (156 aa).

It belongs to the NusB family.

Its function is as follows. Involved in transcription antitermination. Required for transcription of ribosomal RNA (rRNA) genes. Binds specifically to the boxA antiterminator sequence of the ribosomal RNA (rrn) operons. The polypeptide is Transcription antitermination protein NusB (Xanthomonas oryzae pv. oryzae (strain MAFF 311018)).